The chain runs to 235 residues: Sugar fermentation stimulation protein homolog (235 aa).

The protein belongs to the SfsA family.

This Maricaulis maris (strain MCS10) (Caulobacter maris) protein is Sugar fermentation stimulation protein homolog.